A 164-amino-acid chain; its full sequence is ATP synthase subunit b (164 aa).

The helical transmembrane segment at 5–25 (IGELIGNFILVAGSFLLLIVL) threads the bilayer.

This sequence belongs to the ATPase B chain family. In terms of assembly, F-type ATPases have 2 components, F(1) - the catalytic core - and F(0) - the membrane proton channel. F(1) has five subunits: alpha(3), beta(3), gamma(1), delta(1), epsilon(1). F(0) has three main subunits: a(1), b(2) and c(10-14). The alpha and beta chains form an alternating ring which encloses part of the gamma chain. F(1) is attached to F(0) by a central stalk formed by the gamma and epsilon chains, while a peripheral stalk is formed by the delta and b chains.

The protein resides in the cell membrane. Functionally, f(1)F(0) ATP synthase produces ATP from ADP in the presence of a proton or sodium gradient. F-type ATPases consist of two structural domains, F(1) containing the extramembraneous catalytic core and F(0) containing the membrane proton channel, linked together by a central stalk and a peripheral stalk. During catalysis, ATP synthesis in the catalytic domain of F(1) is coupled via a rotary mechanism of the central stalk subunits to proton translocation. In terms of biological role, component of the F(0) channel, it forms part of the peripheral stalk, linking F(1) to F(0). The chain is ATP synthase subunit b from Streptococcus gordonii (strain Challis / ATCC 35105 / BCRC 15272 / CH1 / DL1 / V288).